The following is a 293-amino-acid chain: Protein Pat (293 aa).

Positions Leu-187–Ala-287 constitute a BEN domain.

As to quaternary structure, interacts with poc1b. As to expression, an mRNA and protein component of germ plasm and primordial germ cells (PGCs) throughout oogenesis and early development, being first localized to the granulo-fibrillar material (GFM) of the mitochondrial cloud in stage I and II oocytes and to the periphery of mature germinal granules both in oocytes and in embryos. Shows some somatic expression including the ectodermal cells of tailbud embryos. In adults, only expressed in ovaries.

It localises to the cytoplasm. It is found in the nucleus. Probably plays a role in germ plasm formation, positioning and maintenance. In Xenopus laevis (African clawed frog), this protein is Protein Pat.